A 312-amino-acid polypeptide reads, in one-letter code: Beta-ketoacyl-[acyl-carrier-protein] synthase III (312 aa).

Residues C112 and H237 contribute to the active site. Residues 238-242 (QANIR) form an ACP-binding region. Residue N267 is part of the active site.

This sequence belongs to the thiolase-like superfamily. FabH family. In terms of assembly, homodimer.

The protein localises to the cytoplasm. The enzyme catalyses (2S)-2-methylbutanoyl-CoA + malonyl-[ACP] + H(+) = (4S)-4-methyl-3-oxohexanoyl-[ACP] + CO2 + CoA. The catalysed reaction is 2-methylpropanoyl-CoA + malonyl-[ACP] + H(+) = 4-methyl-3-oxopentanoyl-[ACP] + CO2 + CoA. It catalyses the reaction 3-methylbutanoyl-CoA + malonyl-[ACP] + H(+) = 5-methyl-3-oxohexanoyl-[ACP] + CO2 + CoA. It carries out the reaction malonyl-[ACP] + acetyl-CoA + H(+) = 3-oxobutanoyl-[ACP] + CO2 + CoA. It participates in lipid metabolism; fatty acid biosynthesis. Functionally, catalyzes the condensation reaction of fatty acid synthesis by the addition to an acyl acceptor of two carbons from malonyl-ACP. Catalyzes the first condensation reaction which initiates fatty acid synthesis and may therefore play a role in governing the total rate of fatty acid production. Possesses both acetoacetyl-ACP synthase and acetyl transacylase activities. Can use branched-chain acyl-CoAs, with a preference for 2-methylbutanoyl-CoA, the precursor of odd-numbered anteiso fatty acids, at 30 degrees Celsius, which is further increased at a low temperature. Shows weak activity with acetyl-CoA. The sequence is that of Beta-ketoacyl-[acyl-carrier-protein] synthase III from Listeria monocytogenes serotype 1/2a (strain 10403S).